Here is a 415-residue protein sequence, read N- to C-terminus: ATP-dependent Clp protease ATP-binding subunit ClpX (415 aa).

A ClpX-type ZB domain is found at 1-53 (MLRSKGDLVLGCSFCGKKEDERRRIVTGHGVSICNYCVERCAEYLRDRKPSAL). 4 residues coordinate Zn(2+): C12, C15, C34, and C37. ATP is bound at residue 118-125 (PTGSGKTL).

It belongs to the ClpX chaperone family. As to quaternary structure, component of the ClpX-ClpP complex. Forms a hexameric ring that, in the presence of ATP, binds to fourteen ClpP subunits assembled into a disk-like structure with a central cavity, resembling the structure of eukaryotic proteasomes.

In terms of biological role, ATP-dependent specificity component of the Clp protease. It directs the protease to specific substrates. Can perform chaperone functions in the absence of ClpP. This Treponema pallidum (strain Nichols) protein is ATP-dependent Clp protease ATP-binding subunit ClpX.